Here is a 179-residue protein sequence, read N- to C-terminus: Protein GrpE (179 aa).

The disordered stretch occupies residues M1–E20.

Belongs to the GrpE family. As to quaternary structure, homodimer.

It localises to the cytoplasm. Its function is as follows. Participates actively in the response to hyperosmotic and heat shock by preventing the aggregation of stress-denatured proteins, in association with DnaK and GrpE. It is the nucleotide exchange factor for DnaK and may function as a thermosensor. Unfolded proteins bind initially to DnaJ; upon interaction with the DnaJ-bound protein, DnaK hydrolyzes its bound ATP, resulting in the formation of a stable complex. GrpE releases ADP from DnaK; ATP binding to DnaK triggers the release of the substrate protein, thus completing the reaction cycle. Several rounds of ATP-dependent interactions between DnaJ, DnaK and GrpE are required for fully efficient folding. This chain is Protein GrpE, found in Lactococcus lactis subsp. lactis (strain IL1403) (Streptococcus lactis).